A 469-amino-acid chain; its full sequence is uncharacterized protein (469 aa).

Residues 203–244 (ACPVPPQGHASSAADQAGVPERGRKRAHEGPGAGEAASAGRG) form a disordered region.

This sequence belongs to the epstein-barr virus LF1 family.

This is an uncharacterized protein from Homo sapiens (Human).